We begin with the raw amino-acid sequence, 435 residues long: Cysteine--tRNA ligase (435 aa).

Zn(2+) is bound at residue C24. A 'HIGH' region motif is present at residues 26-36 (PTVYDHIHIGN). 3 residues coordinate Zn(2+): C202, H228, and E232. A 'KMSKS' region motif is present at residues 260–264 (KMSKS). ATP is bound at residue K263.

The protein belongs to the class-I aminoacyl-tRNA synthetase family. As to quaternary structure, monomer. The cofactor is Zn(2+).

The protein localises to the cytoplasm. It carries out the reaction tRNA(Cys) + L-cysteine + ATP = L-cysteinyl-tRNA(Cys) + AMP + diphosphate. The protein is Cysteine--tRNA ligase of Mycoplasmoides gallisepticum (strain R(low / passage 15 / clone 2)) (Mycoplasma gallisepticum).